The chain runs to 66 residues: uncharacterized protein (66 aa).

This is an uncharacterized protein from Archaeoglobus fulgidus (strain ATCC 49558 / DSM 4304 / JCM 9628 / NBRC 100126 / VC-16).